Consider the following 395-residue polypeptide: Trans-2-enoyl-CoA reductase [NADH] (395 aa).

NAD(+) contacts are provided by residues 47–52 (GASTGY), 73–74 (FE), 110–111 (DA), and 138–139 (LA). Y224 provides a ligand contact to substrate. Residue Y234 is the Proton donor of the active site. NAD(+) is bound by residues K243 and 272–274 (VVT).

This sequence belongs to the TER reductase family. In terms of assembly, monomer.

The enzyme catalyses a 2,3-saturated acyl-CoA + NAD(+) = a (2E)-enoyl-CoA + NADH + H(+). It functions in the pathway lipid metabolism; fatty acid biosynthesis. In terms of biological role, involved in the fatty acid synthesis (FAS II). Catalyzes the reduction of a carbon-carbon double bond in an enoyl moiety that is covalently linked to a coenzyme A (CoA). In Ruminiclostridium cellulolyticum (strain ATCC 35319 / DSM 5812 / JCM 6584 / H10) (Clostridium cellulolyticum), this protein is Trans-2-enoyl-CoA reductase [NADH].